We begin with the raw amino-acid sequence, 692 residues long: Elongation factor G (692 aa).

The tr-type G domain maps to 9–284 (EKIRNIGIMA…AVVDYLPSPV (276 aa)). Residues 18–25 (AHIDAGKT), 82–86 (DTPGH), and 136–139 (NKMD) contribute to the GTP site.

Belongs to the TRAFAC class translation factor GTPase superfamily. Classic translation factor GTPase family. EF-G/EF-2 subfamily.

The protein localises to the cytoplasm. Catalyzes the GTP-dependent ribosomal translocation step during translation elongation. During this step, the ribosome changes from the pre-translocational (PRE) to the post-translocational (POST) state as the newly formed A-site-bound peptidyl-tRNA and P-site-bound deacylated tRNA move to the P and E sites, respectively. Catalyzes the coordinated movement of the two tRNA molecules, the mRNA and conformational changes in the ribosome. The chain is Elongation factor G from Neorickettsia sennetsu (strain ATCC VR-367 / Miyayama) (Ehrlichia sennetsu).